The primary structure comprises 524 residues: Probable glutamyl-tRNA reductase 3, chloroplastic (524 aa).

A chloroplast-targeting transit peptide spans Met-1–Arg-52. Substrate is bound by residues Thr-129–Arg-132, Ser-189, Glu-194–Gln-196, and Gln-200. Cys-130 functions as the Nucleophile in the catalytic mechanism. An NADP(+)-binding site is contributed by Gly-269–Gly-274.

This sequence belongs to the glutamyl-tRNA reductase family.

It is found in the plastid. The protein localises to the chloroplast. The enzyme catalyses (S)-4-amino-5-oxopentanoate + tRNA(Glu) + NADP(+) = L-glutamyl-tRNA(Glu) + NADPH + H(+). It functions in the pathway porphyrin-containing compound metabolism; protoporphyrin-IX biosynthesis; 5-aminolevulinate from L-glutamyl-tRNA(Glu): step 1/2. It participates in porphyrin-containing compound metabolism; chlorophyll biosynthesis. Functionally, catalyzes the NADPH-dependent reduction of glutamyl-tRNA(Glu) to glutamate 1-semialdehyde (GSA). In Arabidopsis thaliana (Mouse-ear cress), this protein is Probable glutamyl-tRNA reductase 3, chloroplastic (HEMA3).